A 40-amino-acid polypeptide reads, in one-letter code: Large ribosomal subunit protein bL36B (40 aa).

Belongs to the bacterial ribosomal protein bL36 family.

This chain is Large ribosomal subunit protein bL36B, found in Kocuria rhizophila (strain ATCC 9341 / DSM 348 / NBRC 103217 / DC2201).